A 1866-amino-acid chain; its full sequence is RNA1 polyprotein (1866 aa).

Positions 462–633 (LKGINDLEQL…KAYDAANFAS (172 aa)) constitute an SF3 helicase domain. 494-501 (GKSRTGKS) provides a ligand contact to ATP. A helical transmembrane segment spans residues 897-917 (LVGSGNGPVLMGVAAGAFSAE). S920 is subject to O-(5'-phospho-RNA)-serine. Positions 945–1150 (DAQMSLDQSS…CASLLPPLEP (206 aa)) constitute a Peptidase C3 domain. Active-site for picornain 3C-like protease activity residues include H987, E1023, and C1113. The RdRp catalytic domain occupies 1429-1559 (NDVLCCDYSS…SVNAVVTPYF (131 aa)).

In terms of processing, specific enzymatic cleavages by picornain 3C-like protease in vivo yield mature proteins. Picornain 3C-like protease is autocatalytically processed. Post-translationally, uridylylated by the polymerase and is covalently linked to the 5'-end of genomic RNA. This uridylylated form acts as a nucleotide-peptide primer for the polymerase.

The protein resides in the host membrane. It localises to the host cytoplasm. Its subcellular location is the host perinuclear region. It is found in the host endoplasmic reticulum. It catalyses the reaction RNA(n) + a ribonucleoside 5'-triphosphate = RNA(n+1) + diphosphate. Thiol protease that cleaves the RNA1 and RNA2 polyproteins. Functionally, plays a role in RNA replication. It is covalently linked to the 5'terminus of both viral single-stranded RNA1 and RNA2 molecules. In terms of biological role, down-regulates the RNA1 polyprotein processing and enhances trans-cleavage of RNA2 polyproteins. The protease cofactor and the putative helicase seem to target the replication complexes to ER membranes. Their physical association causes the membrane rearrangement of host ER that may result in formation of the small membranous vesicles that are the site of viral RNA synthesis. Its function is as follows. The protease cofactor and the putative helicase seem to target the replication complexes to ER membranes. Their physical association causes the membrane rearrangement of host ER that may result in formation of the small membranous vesicles that are the site of viral RNA synthesis. Replicates the viral genome. This chain is RNA1 polyprotein, found in Cajanus cajan (Pigeon pea).